The primary structure comprises 544 residues: Protein kinase dsk1 (544 aa).

Positions 81–516 constitute a Protein kinase domain; it reads YVVERKLGWG…AGYMSNSPWL (436 aa). ATP is bound by residues 87–95 and Lys110; that span reads LGWGHFSTV. Asp214 (proton acceptor) is an active-site residue. Disordered stretches follow at residues 235 to 299 and 316 to 341; these read PATT…SSPF and ISLR…SLIL. A compositionally biased stretch (low complexity) spans 237–254; that stretch reads TTSSPTSNTSSSKTRNNT. Composition is skewed to polar residues over residues 281–299 and 327–337; these read KNPT…SSPF and HPNSPFSSGDN.

The protein belongs to the protein kinase superfamily. Ser/Thr protein kinase family. Post-translationally, phosphorylated on Ser residue(s).

The protein localises to the cytoplasm. It localises to the nucleus. It catalyses the reaction L-seryl-[protein] + ATP = O-phospho-L-seryl-[protein] + ADP + H(+). It carries out the reaction L-threonyl-[protein] + ATP = O-phospho-L-threonyl-[protein] + ADP + H(+). In terms of biological role, may play an important role in mitotic control by altering cellular location, degree of phosphorylation and kinase activity. Abundant expression accelerates the exit when cells are in M-phase and also delays the entry into mitosis when cells are in G2. Phosphorylates prp2 in vitro and so may have a role in co-ordinating pre-mRNA splicing with the progression of the cell division cycle. The polypeptide is Protein kinase dsk1 (dsk1) (Schizosaccharomyces pombe (strain 972 / ATCC 24843) (Fission yeast)).